The sequence spans 342 residues: tRNA N6-adenosine threonylcarbamoyltransferase (342 aa).

Positions 119 and 123 each coordinate Fe cation. Substrate-binding positions include 142 to 146 (VVSGG), Asp-175, Gly-188, and Asn-282. Fe cation is bound at residue Asp-310.

Belongs to the KAE1 / TsaD family. Fe(2+) serves as cofactor.

It localises to the cytoplasm. The enzyme catalyses L-threonylcarbamoyladenylate + adenosine(37) in tRNA = N(6)-L-threonylcarbamoyladenosine(37) in tRNA + AMP + H(+). In terms of biological role, required for the formation of a threonylcarbamoyl group on adenosine at position 37 (t(6)A37) in tRNAs that read codons beginning with adenine. Is involved in the transfer of the threonylcarbamoyl moiety of threonylcarbamoyl-AMP (TC-AMP) to the N6 group of A37, together with TsaE and TsaB. TsaD likely plays a direct catalytic role in this reaction. The polypeptide is tRNA N6-adenosine threonylcarbamoyltransferase (Moorella thermoacetica (strain ATCC 39073 / JCM 9320)).